Consider the following 318-residue polypeptide: N-acetyl-gamma-glutamyl-phosphate reductase (318 aa).

The active site involves C132.

It belongs to the NAGSA dehydrogenase family. Type 1 subfamily.

It localises to the cytoplasm. It carries out the reaction N-acetyl-L-glutamate 5-semialdehyde + phosphate + NADP(+) = N-acetyl-L-glutamyl 5-phosphate + NADPH + H(+). It participates in amino-acid biosynthesis; L-arginine biosynthesis; N(2)-acetyl-L-ornithine from L-glutamate: step 3/4. Its function is as follows. Catalyzes the NADPH-dependent reduction of N-acetyl-5-glutamyl phosphate to yield N-acetyl-L-glutamate 5-semialdehyde. The polypeptide is N-acetyl-gamma-glutamyl-phosphate reductase (Azobacteroides pseudotrichonymphae genomovar. CFP2).